Reading from the N-terminus, the 242-residue chain is Anthranilate phosphoribosyltransferase (242 aa).

5-phospho-alpha-D-ribose 1-diphosphate contacts are provided by residues glycine 79, 82–83 (GD), threonine 87, 89–92 (NVST), 107–115 (KHGNRAVSS), and serine 119. Glycine 79 contributes to the anthranilate binding site. Serine 91 lines the Mg(2+) pocket. Asparagine 110 contributes to the anthranilate binding site. Arginine 165 serves as a coordination point for anthranilate. Mg(2+) is bound by residues aspartate 224 and glutamate 225.

The protein belongs to the anthranilate phosphoribosyltransferase family. As to quaternary structure, homodimer. The cofactor is Mg(2+).

It carries out the reaction N-(5-phospho-beta-D-ribosyl)anthranilate + diphosphate = 5-phospho-alpha-D-ribose 1-diphosphate + anthranilate. It participates in amino-acid biosynthesis; L-tryptophan biosynthesis; L-tryptophan from chorismate: step 2/5. Functionally, catalyzes the transfer of the phosphoribosyl group of 5-phosphorylribose-1-pyrophosphate (PRPP) to anthranilate to yield N-(5'-phosphoribosyl)-anthranilate (PRA). The chain is Anthranilate phosphoribosyltransferase (trpD) from Bacillus caldotenax.